The chain runs to 248 residues: UDP-2,3-diacylglucosamine hydrolase (248 aa).

Mn(2+) contacts are provided by aspartate 7, histidine 9, aspartate 40, asparagine 78, and histidine 113. 78-79 (NR) contributes to the substrate binding site. 5 residues coordinate substrate: aspartate 121, serine 159, threonine 163, lysine 166, and histidine 194. Mn(2+) contacts are provided by histidine 194 and histidine 196.

This sequence belongs to the LpxH family. It depends on Mn(2+) as a cofactor.

It localises to the cell inner membrane. The enzyme catalyses UDP-2-N,3-O-bis[(3R)-3-hydroxytetradecanoyl]-alpha-D-glucosamine + H2O = 2-N,3-O-bis[(3R)-3-hydroxytetradecanoyl]-alpha-D-glucosaminyl 1-phosphate + UMP + 2 H(+). It participates in glycolipid biosynthesis; lipid IV(A) biosynthesis; lipid IV(A) from (3R)-3-hydroxytetradecanoyl-[acyl-carrier-protein] and UDP-N-acetyl-alpha-D-glucosamine: step 4/6. Functionally, hydrolyzes the pyrophosphate bond of UDP-2,3-diacylglucosamine to yield 2,3-diacylglucosamine 1-phosphate (lipid X) and UMP by catalyzing the attack of water at the alpha-P atom. Involved in the biosynthesis of lipid A, a phosphorylated glycolipid that anchors the lipopolysaccharide to the outer membrane of the cell. The sequence is that of UDP-2,3-diacylglucosamine hydrolase from Pseudomonas fluorescens (strain Pf0-1).